A 934-amino-acid polypeptide reads, in one-letter code: Diacylglycerol kinase theta (934 aa).

Positions 1–50 are disordered; that stretch reads MAAAAEPGARTWPGSGSPRLGSPAGSPVLGISGRTRPGSGPERTSRAIGS. Serine 22 and serine 26 each carry phosphoserine. 3 Phorbol-ester/DAG-type zinc fingers span residues 54 to 102, 115 to 162, and 177 to 228; these read GHSF…KTPC, AHCF…CSDC, and HHHW…APEC. Positions 387–486 constitute a Ras-associating domain; it reads TQEILKIYPG…TRFYVAETRA (100 aa). 2 short sequence motifs (LXXLL motif) span residues 547 to 551 and 566 to 570; these read LYMLA and LPDVL. One can recognise a DAGKc domain in the interval 576 to 713; that stretch reads PDCCPLLVFV…MDRWTILLDA (138 aa). Over residues 905–916 the composition is skewed to basic residues; sequence LRKAKQKPRKAG. The disordered stretch occupies residues 905-934; that stretch reads LRKAKQKPRKAGANRDTRVDTLPAPEGNPL.

This sequence belongs to the eukaryotic diacylglycerol kinase family. In terms of assembly, interacts with RHOA (constitutively activated, GTP-bound); the interaction inhibits DGKQ. Interacts with PRKCE. Interacts with PRKCH. Interacts with PLCB1. Interacts with NR5A1; the interaction requires both LXXLL motifs in DGKQ and is required for full phosphatidic acid-mediated activation of NR5A1. Phosphorylated by PRKCE and PRKCH in vitro. Widely expressed in all brain regions, including the cortex and hippocampus with a specific expression in neuronal cells (at protein level).

The protein localises to the cytoplasm. It localises to the cytosol. The protein resides in the cell membrane. It is found in the synapse. Its subcellular location is the cytoskeleton. The protein localises to the nucleus. It localises to the nucleus speckle. The protein resides in the nucleus matrix. The catalysed reaction is a 1,2-diacyl-sn-glycerol + ATP = a 1,2-diacyl-sn-glycero-3-phosphate + ADP + H(+). It catalyses the reaction a 1-O-alkyl-sn-glycerol + ATP = a 1-O-alkyl-sn-glycero-3-phosphate + ADP + H(+). It carries out the reaction 1-O-alkyl-2-acyl-sn-glycerol + ATP = 1-O-alkyl-2-acyl-sn-glycero-3-phosphate + ADP + H(+). The enzyme catalyses 1,2-di-(9Z-octadecenoyl)-sn-glycerol + ATP = 1,2-di-(9Z-octadecenoyl)-sn-glycero-3-phosphate + ADP + H(+). The catalysed reaction is 1-O-hexadecyl-sn-glycerol + ATP = 1-O-hexadecyl-sn-glycero-3-phosphate + ADP + H(+). It catalyses the reaction 1-O-hexadecyl-2-acetyl-sn-glycerol + ATP = 1-O-hexadecyl-2-acetyl-sn-glycero-3-phosphate + ADP + H(+). It carries out the reaction 1-octadecanoyl-2-(5Z,8Z,11Z,14Z-eicosatetraenoyl)-sn-glycerol + ATP = 1-octadecanoyl-2-(5Z,8Z,11Z,14Z-eicosatetraenoyl)-sn-glycero-3-phosphate + ADP + H(+). Its pathway is lipid metabolism; glycerolipid metabolism. Activated by phosphatidylserine. In terms of biological role, diacylglycerol kinase that converts diacylglycerol/DAG into phosphatidic acid/phosphatidate/PA and regulates the respective levels of these two bioactive lipids. Thereby, acts as a central switch between the signaling pathways activated by these second messengers with different cellular targets and opposite effects in numerous biological processes. Within the adrenocorticotropic hormone signaling pathway, produces phosphatidic acid which in turn activates NR5A1 and subsequent steroidogenic gene transcription. Also functions downstream of the nerve growth factor signaling pathway being specifically activated in the nucleus by the growth factor. Through its diacylglycerol activity also regulates synaptic vesicle endocytosis. This is Diacylglycerol kinase theta (Dgkq) from Mus musculus (Mouse).